Here is a 199-residue protein sequence, read N- to C-terminus: Pyridoxal 5'-phosphate synthase subunit PdxT (199 aa).

49–51 (GES) is an L-glutamine binding site. The active-site Nucleophile is the C81. L-glutamine is bound by residues R110 and 139–140 (IR). Active-site charge relay system residues include H175 and E177.

Belongs to the glutaminase PdxT/SNO family. In the presence of PdxS, forms a dodecamer of heterodimers. Only shows activity in the heterodimer.

It catalyses the reaction aldehydo-D-ribose 5-phosphate + D-glyceraldehyde 3-phosphate + L-glutamine = pyridoxal 5'-phosphate + L-glutamate + phosphate + 3 H2O + H(+). It carries out the reaction L-glutamine + H2O = L-glutamate + NH4(+). Its pathway is cofactor biosynthesis; pyridoxal 5'-phosphate biosynthesis. In terms of biological role, catalyzes the hydrolysis of glutamine to glutamate and ammonia as part of the biosynthesis of pyridoxal 5'-phosphate. The resulting ammonia molecule is channeled to the active site of PdxS. The chain is Pyridoxal 5'-phosphate synthase subunit PdxT from Frankia alni (strain DSM 45986 / CECT 9034 / ACN14a).